A 453-amino-acid polypeptide reads, in one-letter code: Ribulose bisphosphate carboxylase large chain (453 aa).

Residues 1-2 (MS) constitute a propeptide that is removed on maturation. An N-acetylproline modification is found at Pro3. Lys14 is modified (N6,N6,N6-trimethyllysine). Substrate-binding residues include Asn123 and Thr173. The active-site Proton acceptor is Lys175. Residue Lys177 participates in substrate binding. Mg(2+) is bound by residues Lys201, Asp203, and Glu204. The residue at position 201 (Lys201) is an N6-carboxylysine. His294 serves as the catalytic Proton acceptor. 3 residues coordinate substrate: Arg295, His327, and Ser379.

This sequence belongs to the RuBisCO large chain family. Type I subfamily. Heterohexadecamer of 8 large chains and 8 small chains; disulfide-linked. The disulfide link is formed within the large subunit homodimers. Mg(2+) is required as a cofactor. Post-translationally, the disulfide bond which can form in the large chain dimeric partners within the hexadecamer appears to be associated with oxidative stress and protein turnover.

The protein localises to the plastid. It localises to the chloroplast. It catalyses the reaction 2 (2R)-3-phosphoglycerate + 2 H(+) = D-ribulose 1,5-bisphosphate + CO2 + H2O. The catalysed reaction is D-ribulose 1,5-bisphosphate + O2 = 2-phosphoglycolate + (2R)-3-phosphoglycerate + 2 H(+). RuBisCO catalyzes two reactions: the carboxylation of D-ribulose 1,5-bisphosphate, the primary event in carbon dioxide fixation, as well as the oxidative fragmentation of the pentose substrate in the photorespiration process. Both reactions occur simultaneously and in competition at the same active site. In Asperula laevigata (Smooth woodruff), this protein is Ribulose bisphosphate carboxylase large chain.